The sequence spans 341 residues: GTPase Obg (341 aa).

The Obg domain occupies 1–159 (MKFVDEALIK…RNLRLELRVL (159 aa)). The interval 128 to 150 (TRYKSSVNRSPRQTTPGSPGESR) is disordered. Residues 129-144 (RYKSSVNRSPRQTTPG) show a composition bias toward polar residues. An OBG-type G domain is found at 160 to 334 (ADVGLLGLPN…LCYALMQLID (175 aa)). Residues 166–173 (GLPNAGKS), 191–195 (FTTLH), 213–216 (DIPG), 283–286 (NKID), and 315–317 (SAI) contribute to the GTP site. Residues Ser-173 and Thr-193 each contribute to the Mg(2+) site.

This sequence belongs to the TRAFAC class OBG-HflX-like GTPase superfamily. OBG GTPase family. Monomer. The cofactor is Mg(2+).

It is found in the cytoplasm. Functionally, an essential GTPase which binds GTP, GDP and possibly (p)ppGpp with moderate affinity, with high nucleotide exchange rates and a fairly low GTP hydrolysis rate. Plays a role in control of the cell cycle, stress response, ribosome biogenesis and in those bacteria that undergo differentiation, in morphogenesis control. In Legionella pneumophila (strain Paris), this protein is GTPase Obg.